Here is a 183-residue protein sequence, read N- to C-terminus: Seminal plasma protein BSP-30 kDa (183 aa).

Positions 1-25 (MAPLVGLFLIWAGASVFQQLHPVNG) are cleaved as a signal peptide. Positions 23 to 47 (VNGGDIPDPGSKPTPPGMADELPTE) are disordered. T36, T46, T57, T58, T59, and T64 each carry an O-linked (GalNAc...) threonine glycan. Fibronectin type-II domains are found at residues 92–136 (FEGP…FCTE) and 137–183 (RDEP…WKYC). 4 cysteine pairs are disulfide-bonded: C97–C121, C111–C134, C142–C168, and C156–C183.

Belongs to the seminal plasma protein family.

The protein resides in the secreted. Binds to spermatozoa upon ejaculation and may play a role in sperm capacitation. Displays heparin-, gelatin- and phospholipid-binding activities. The protein is Seminal plasma protein BSP-30 kDa of Bos taurus (Bovine).